We begin with the raw amino-acid sequence, 1377 residues long: DNA-directed RNA polymerase subunit beta (1377 aa).

The protein belongs to the RNA polymerase beta chain family. In terms of assembly, the RNAP catalytic core consists of 2 alpha, 1 beta, 1 beta' and 1 omega subunit. When a sigma factor is associated with the core the holoenzyme is formed, which can initiate transcription.

The catalysed reaction is RNA(n) + a ribonucleoside 5'-triphosphate = RNA(n+1) + diphosphate. Functionally, DNA-dependent RNA polymerase catalyzes the transcription of DNA into RNA using the four ribonucleoside triphosphates as substrates. The sequence is that of DNA-directed RNA polymerase subunit beta from Brucella abortus (strain S19).